A 284-amino-acid chain; its full sequence is D-tagatose-1,6-bisphosphate aldolase subunit GatY (284 aa).

The Proton donor role is filled by Asp82. Residues His83 and His180 each contribute to the Zn(2+) site. Dihydroxyacetone phosphate is bound at residue Gly181. A Zn(2+)-binding site is contributed by His208. Dihydroxyacetone phosphate contacts are provided by residues 209–211 and 230–233; these read GAS and NVAT.

Belongs to the class II fructose-bisphosphate aldolase family. TagBP aldolase GatY subfamily. In terms of assembly, forms a complex with GatZ. The cofactor is Zn(2+).

It carries out the reaction D-tagatofuranose 1,6-bisphosphate = D-glyceraldehyde 3-phosphate + dihydroxyacetone phosphate. The protein operates within carbohydrate metabolism; D-tagatose 6-phosphate degradation; D-glyceraldehyde 3-phosphate and glycerone phosphate from D-tagatose 6-phosphate: step 2/2. In terms of biological role, catalytic subunit of the tagatose-1,6-bisphosphate aldolase GatYZ, which catalyzes the reversible aldol condensation of dihydroxyacetone phosphate (DHAP or glycerone-phosphate) with glyceraldehyde 3-phosphate (G3P) to produce tagatose 1,6-bisphosphate (TBP). Requires GatZ subunit for full activity and stability. Is involved in the catabolism of galactitol. The polypeptide is D-tagatose-1,6-bisphosphate aldolase subunit GatY (Shigella flexneri).